A 320-amino-acid polypeptide reads, in one-letter code: Cytochrome f (320 aa).

The signal sequence occupies residues 1-35 (MQNRNTFSWVKEQMTRSIFVSMMIYIITRASISNA). Heme is bound by residues Tyr-36, Cys-56, Cys-59, and His-60. The chain crosses the membrane as a helical span at residues 286-306 (IQGLFLFLASVILAQIFLVLK).

It belongs to the cytochrome f family. As to quaternary structure, the 4 large subunits of the cytochrome b6-f complex are cytochrome b6, subunit IV (17 kDa polypeptide, petD), cytochrome f and the Rieske protein, while the 4 small subunits are PetG, PetL, PetM and PetN. The complex functions as a dimer. It depends on heme as a cofactor.

It is found in the plastid. The protein resides in the chloroplast thylakoid membrane. Its function is as follows. Component of the cytochrome b6-f complex, which mediates electron transfer between photosystem II (PSII) and photosystem I (PSI), cyclic electron flow around PSI, and state transitions. This Amborella trichopoda protein is Cytochrome f.